We begin with the raw amino-acid sequence, 119 residues long: NADH-quinone oxidoreductase subunit A (119 aa).

3 helical membrane passes run Phe-7 to Gly-27, Leu-63 to Val-83, and Ile-88 to Val-108.

The protein belongs to the complex I subunit 3 family. NDH-1 is composed of 14 different subunits. Subunits NuoA, H, J, K, L, M, N constitute the membrane sector of the complex.

Its subcellular location is the cell inner membrane. It catalyses the reaction a quinone + NADH + 5 H(+)(in) = a quinol + NAD(+) + 4 H(+)(out). NDH-1 shuttles electrons from NADH, via FMN and iron-sulfur (Fe-S) centers, to quinones in the respiratory chain. The immediate electron acceptor for the enzyme in this species is believed to be ubiquinone. Couples the redox reaction to proton translocation (for every two electrons transferred, four hydrogen ions are translocated across the cytoplasmic membrane), and thus conserves the redox energy in a proton gradient. The protein is NADH-quinone oxidoreductase subunit A of Ralstonia nicotianae (strain ATCC BAA-1114 / GMI1000) (Ralstonia solanacearum).